The chain runs to 584 residues: ATP-dependent lipid A-core flippase (584 aa).

Helical transmembrane passes span 15–35, 63–83, 153–173, 251–271, and 277–297; these read LLGY…SMAV, IMWV…AGFI, LGML…CLVV, TGVT…FAGL, and GLTA…FAPV. Residues 27–309 enclose the ABC transmembrane type-1 domain; it reads LLSMLSMAVA…ISSVSQAMQR (283 aa). The ABC transporter domain maps to 341-576; the sequence is LSFDAVSFAY…GGLYARLHSL (236 aa). 375–382 is an ATP binding site; that stretch reads GSSGSGKT.

This sequence belongs to the ABC transporter superfamily. Lipid exporter (TC 3.A.1.106) family. In terms of assembly, homodimer.

The protein localises to the cell inner membrane. The catalysed reaction is ATP + H2O + lipid A-core oligosaccharideSide 1 = ADP + phosphate + lipid A-core oligosaccharideSide 2.. Its function is as follows. Involved in lipopolysaccharide (LPS) biosynthesis. Translocates lipid A-core from the inner to the outer leaflet of the inner membrane. Transmembrane domains (TMD) form a pore in the inner membrane and the ATP-binding domain (NBD) is responsible for energy generation. This Chromobacterium violaceum (strain ATCC 12472 / DSM 30191 / JCM 1249 / CCUG 213 / NBRC 12614 / NCIMB 9131 / NCTC 9757 / MK) protein is ATP-dependent lipid A-core flippase.